The sequence spans 156 residues: Ribonuclease pancreatic (156 aa).

Positions 1 to 28 are cleaved as a signal peptide; it reads MALEKSLALLPLLVLVLLVLGWVQPSLG. The segment covering 33–43 has biased composition (basic and acidic residues); that stretch reads AKKFQRQHMDS. The segment at 33 to 52 is disordered; sequence AKKFQRQHMDSDGSPSSNPT. Substrate-binding residues include Lys-35 and Arg-38. His-40 (proton acceptor) is an active-site residue. 4 cysteine pairs are disulfide-bonded: Cys-54–Cys-112, Cys-68–Cys-123, Cys-86–Cys-138, and Cys-93–Cys-100. Residue Asn-62 is glycosylated (N-linked (GlcNAc...) asparagine). 69–73 is a substrate binding site; that stretch reads KPVNT. Asn-90 carries an N-linked (GlcNAc...) asparagine glycan. Substrate-binding residues include Lys-94 and Arg-113. An N-linked (GlcNAc...) asparagine glycan is attached at Asn-116. Catalysis depends on His-147, which acts as the Proton donor.

The protein belongs to the pancreatic ribonuclease family. Monomer. Interacts with and forms tight 1:1 complexes with RNH1. Dimerization of two such complexes may occur. Interaction with RNH1 inhibits this protein.

Its subcellular location is the secreted. The enzyme catalyses an [RNA] containing cytidine + H2O = an [RNA]-3'-cytidine-3'-phosphate + a 5'-hydroxy-ribonucleotide-3'-[RNA].. It catalyses the reaction an [RNA] containing uridine + H2O = an [RNA]-3'-uridine-3'-phosphate + a 5'-hydroxy-ribonucleotide-3'-[RNA].. Its function is as follows. Endonuclease that catalyzes the cleavage of RNA on the 3' side of pyrimidine nucleotides. Acts on single-stranded and double-stranded RNA. This chain is Ribonuclease pancreatic (RNASE1), found in Ateles geoffroyi (Black-handed spider monkey).